Reading from the N-terminus, the 432-residue chain is Solute carrier family 35 member F5 (432 aa).

Positions 1–33 are cleaved as a signal peptide; sequence MFLPSTTNHSSAPLQKHLCLFCTFWALLFGSHG. At S116 the chain carries Phosphoserine. 8 consecutive transmembrane segments (helical) span residues 152–172, 177–197, 205–225, 236–256, 270–290, 304–324, 329–349, and 361–381; these read ISFFFCFVWFLANLSYQEALS, AIVNILSSTSGLFTLILAAVF, FTLSKLLAVILSIGGVVLVNL, TIGSIWSLAGAMLYAVYIVMI, MFFGFVGLFNLLLLWPGFFLL, VVLMCIIINGLIGTVLSEFLW, FLTSSLIGTLALSLTIPLSII, and WLFFAGAIPVFFSFFIVTLLC. Positions 161 to 225 constitute an EamA domain; sequence FLANLSYQEA…SIGGVVLVNL (65 aa).

It belongs to the SLC35F solute transporter family.

Its subcellular location is the membrane. In terms of biological role, putative solute transporter. In Macaca fascicularis (Crab-eating macaque), this protein is Solute carrier family 35 member F5 (SLC35F5).